A 95-amino-acid chain; its full sequence is Aspartyl/glutamyl-tRNA(Asn/Gln) amidotransferase subunit C (95 aa).

This sequence belongs to the GatC family. As to quaternary structure, heterotrimer of A, B and C subunits.

It catalyses the reaction L-glutamyl-tRNA(Gln) + L-glutamine + ATP + H2O = L-glutaminyl-tRNA(Gln) + L-glutamate + ADP + phosphate + H(+). The catalysed reaction is L-aspartyl-tRNA(Asn) + L-glutamine + ATP + H2O = L-asparaginyl-tRNA(Asn) + L-glutamate + ADP + phosphate + 2 H(+). Its function is as follows. Allows the formation of correctly charged Asn-tRNA(Asn) or Gln-tRNA(Gln) through the transamidation of misacylated Asp-tRNA(Asn) or Glu-tRNA(Gln) in organisms which lack either or both of asparaginyl-tRNA or glutaminyl-tRNA synthetases. The reaction takes place in the presence of glutamine and ATP through an activated phospho-Asp-tRNA(Asn) or phospho-Glu-tRNA(Gln). The sequence is that of Aspartyl/glutamyl-tRNA(Asn/Gln) amidotransferase subunit C from Rhizobium etli (strain CIAT 652).